A 417-amino-acid polypeptide reads, in one-letter code: NADH-quinone oxidoreductase subunit D (417 aa).

Belongs to the complex I 49 kDa subunit family. As to quaternary structure, NDH-1 is composed of 14 different subunits. Subunits NuoB, C, D, E, F, and G constitute the peripheral sector of the complex.

Its subcellular location is the cell inner membrane. It catalyses the reaction a quinone + NADH + 5 H(+)(in) = a quinol + NAD(+) + 4 H(+)(out). Functionally, NDH-1 shuttles electrons from NADH, via FMN and iron-sulfur (Fe-S) centers, to quinones in the respiratory chain. The immediate electron acceptor for the enzyme in this species is believed to be ubiquinone. Couples the redox reaction to proton translocation (for every two electrons transferred, four hydrogen ions are translocated across the cytoplasmic membrane), and thus conserves the redox energy in a proton gradient. The sequence is that of NADH-quinone oxidoreductase subunit D from Coxiella burnetii (strain Dugway 5J108-111).